A 509-amino-acid chain; its full sequence is Maturase K (509 aa).

It belongs to the intron maturase 2 family. MatK subfamily.

It is found in the plastid. The protein localises to the chloroplast. Its function is as follows. Usually encoded in the trnK tRNA gene intron. Probably assists in splicing its own and other chloroplast group II introns. The polypeptide is Maturase K (Nicotiana tomentosiformis (Tobacco)).